A 195-amino-acid chain; its full sequence is Imidazoleglycerol-phosphate dehydratase (195 aa).

Belongs to the imidazoleglycerol-phosphate dehydratase family.

Its subcellular location is the cytoplasm. The catalysed reaction is D-erythro-1-(imidazol-4-yl)glycerol 3-phosphate = 3-(imidazol-4-yl)-2-oxopropyl phosphate + H2O. Its pathway is amino-acid biosynthesis; L-histidine biosynthesis; L-histidine from 5-phospho-alpha-D-ribose 1-diphosphate: step 6/9. The protein is Imidazoleglycerol-phosphate dehydratase of Maridesulfovibrio salexigens (strain ATCC 14822 / DSM 2638 / NCIMB 8403 / VKM B-1763) (Desulfovibrio salexigens).